The following is a 638-amino-acid chain: Methyl-accepting chemotaxis protein McpQ (638 aa).

The chain crosses the membrane as a helical span at residues 18–38 (LGLGFGLVLLLTLAITLTGWH). Positions 45–282 (DRGDKLGNIS…SQTEVRDAAA (238 aa)) constitute an HBM domain. The chain crosses the membrane as a helical span at residues 287–307 (TLLTVATVLALALGLLAAWAI). In terms of domain architecture, HAMP spans 309–361 (RQIIIPLRQTLRAAERVASGDLTQSLQVQRRDELGQLQASMHRMTQGLRELIG). The Methyl-accepting transducer domain occupies 366–602 (GVTQIASAAE…EINRSVMNVR (237 aa)).

Belongs to the methyl-accepting chemotaxis (MCP) protein family.

It localises to the cell membrane. Functionally, chemotactic-signal transducers respond to changes in the concentration of attractants and repellents in the environment, transduce a signal from the outside to the inside of the cell, and facilitate sensory adaptation through the variation of the level of methylation. McpQ recognizes specifically citrate and citrate/metal(2+) complexes. Binds citrate/metal(2+) complexes with higher affinity than free citrate, and mediates preferentially chemotaxis toward citrate/metal(2+) complexes. The protein is Methyl-accepting chemotaxis protein McpQ of Pseudomonas putida (strain ATCC 47054 / DSM 6125 / CFBP 8728 / NCIMB 11950 / KT2440).